Consider the following 230-residue polypeptide: Large ribosomal subunit protein uL1 (230 aa).

Belongs to the universal ribosomal protein uL1 family. Part of the 50S ribosomal subunit.

In terms of biological role, binds directly to 23S rRNA. The L1 stalk is quite mobile in the ribosome, and is involved in E site tRNA release. Functionally, protein L1 is also a translational repressor protein, it controls the translation of the L11 operon by binding to its mRNA. The sequence is that of Large ribosomal subunit protein uL1 from Afipia carboxidovorans (strain ATCC 49405 / DSM 1227 / KCTC 32145 / OM5) (Oligotropha carboxidovorans).